The following is a 396-amino-acid chain: Cysteine desulfurase (396 aa).

Pyridoxal 5'-phosphate contacts are provided by residues 71 to 72 (GT), N148, Q176, and 196 to 198 (SGH). The residue at position 199 (K199) is an N6-(pyridoxal phosphate)lysine. Residue T231 coordinates pyridoxal 5'-phosphate. C319 serves as the catalytic Cysteine persulfide intermediate. Residue C319 coordinates [2Fe-2S] cluster.

Belongs to the class-V pyridoxal-phosphate-dependent aminotransferase family. NifS/IscS subfamily. Homodimer. The cofactor is pyridoxal 5'-phosphate.

The enzyme catalyses (sulfur carrier)-H + L-cysteine = (sulfur carrier)-SH + L-alanine. In terms of biological role, catalyzes the removal of elemental sulfur atoms from cysteine to produce alanine. Seems to participate in the biosynthesis of the nitrogenase metalloclusters by providing the inorganic sulfur required for the Fe-S core formation. This is Cysteine desulfurase from Azotobacter chroococcum mcd 1.